Here is a 236-residue protein sequence, read N- to C-terminus: Three prime repair exonuclease 2 (236 aa).

Residues Asp-14 and Glu-16 each contribute to the Mg(2+) site. Substrate is bound by residues 16–17 and Tyr-122; that span reads EA. His-188 (proton donor/acceptor) is an active-site residue. Asp-193 lines the Mg(2+) pocket. Asp-193 provides a ligand contact to substrate.

The protein belongs to the exonuclease superfamily. TREX family. In terms of assembly, homodimer. It depends on Mg(2+) as a cofactor. Detected in heart, breast, prostate, skeletal muscle, testis, uterus, bone marrow, colon, small intestine, stomach and thymus.

The protein localises to the nucleus. It carries out the reaction Exonucleolytic cleavage in the 3'- to 5'-direction to yield nucleoside 5'-phosphates.. Its function is as follows. Exonuclease with a preference for double-stranded DNA with mismatched 3' termini. May play a role in DNA repair. The protein is Three prime repair exonuclease 2 (TREX2) of Homo sapiens (Human).